The chain runs to 348 residues: Phospho-2-dehydro-3-deoxyheptonate aldolase, Trp-sensitive (348 aa).

The protein belongs to the class-I DAHP synthase family.

It carries out the reaction D-erythrose 4-phosphate + phosphoenolpyruvate + H2O = 7-phospho-2-dehydro-3-deoxy-D-arabino-heptonate + phosphate. It participates in metabolic intermediate biosynthesis; chorismate biosynthesis; chorismate from D-erythrose 4-phosphate and phosphoenolpyruvate: step 1/7. Its function is as follows. Stereospecific condensation of phosphoenolpyruvate (PEP) and D-erythrose-4-phosphate (E4P) giving rise to 3-deoxy-D-arabino-heptulosonate-7-phosphate (DAHP). This Salmonella typhi protein is Phospho-2-dehydro-3-deoxyheptonate aldolase, Trp-sensitive (aroH).